Consider the following 291-residue polypeptide: Small ribosomal subunit protein uS2 (291 aa).

This sequence belongs to the universal ribosomal protein uS2 family.

In Orientia tsutsugamushi (strain Boryong) (Rickettsia tsutsugamushi), this protein is Small ribosomal subunit protein uS2.